Here is a 79-residue protein sequence, read N- to C-terminus: Acyl carrier protein (79 aa).

The Carrier domain maps to 3–78 (QEILEKVCSI…DAVKFIEEKK (76 aa)). Ser38 carries the post-translational modification O-(pantetheine 4'-phosphoryl)serine.

Belongs to the acyl carrier protein (ACP) family. In terms of processing, 4'-phosphopantetheine is transferred from CoA to a specific serine of apo-ACP by AcpS. This modification is essential for activity because fatty acids are bound in thioester linkage to the sulfhydryl of the prosthetic group.

It is found in the cytoplasm. Its pathway is lipid metabolism; fatty acid biosynthesis. In terms of biological role, carrier of the growing fatty acid chain in fatty acid biosynthesis. The polypeptide is Acyl carrier protein (Prochlorococcus marinus (strain MIT 9312)).